We begin with the raw amino-acid sequence, 237 residues long: Ribonuclease PH (237 aa).

Phosphate-binding positions include R86 and G124–R126.

Belongs to the RNase PH family. Homohexameric ring arranged as a trimer of dimers.

It carries out the reaction tRNA(n+1) + phosphate = tRNA(n) + a ribonucleoside 5'-diphosphate. Functionally, phosphorolytic 3'-5' exoribonuclease that plays an important role in tRNA 3'-end maturation. Removes nucleotide residues following the 3'-CCA terminus of tRNAs; can also add nucleotides to the ends of RNA molecules by using nucleoside diphosphates as substrates, but this may not be physiologically important. Probably plays a role in initiation of 16S rRNA degradation (leading to ribosome degradation) during starvation. This is Ribonuclease PH from Shewanella sediminis (strain HAW-EB3).